The following is a 362-amino-acid chain: Class I histocompatibility antigen, Gogo-B*0102 alpha chain (362 aa).

The signal sequence occupies residues 1–24; sequence MRVTAPRTLLLLLSAALALTETWA. The alpha-1 stretch occupies residues 25–114; the sequence is GSHSMRYFDT…ALRYYNQSEA (90 aa). Topologically, residues 25 to 308 are extracellular; it reads GSHSMRYFDT…EPSSQSTIPI (284 aa). Asn110 is a glycosylation site (N-linked (GlcNAc...) asparagine). Residues 115 to 206 form an alpha-2 region; the sequence is GSHTFQRMFG…ENGRETLQRA (92 aa). 2 cysteine pairs are disulfide-bonded: Cys125/Cys188 and Cys227/Cys283. Residues 207 to 298 form an alpha-3 region; that stretch reads DTPKTHVTHH…GLPKPLTLRW (92 aa). The Ig-like C1-type domain occupies 209–295; the sequence is PKTHVTHHPI…QHEGLPKPLT (87 aa). Positions 299-308 are connecting peptide; sequence EPSSQSTIPI. The chain crosses the membrane as a helical span at residues 309–332; sequence VGIVAGLAVLAVVVIGAVVTAVIC. Over 333–362 the chain is Cytoplasmic; sequence RRKSSGGKGGSYSQAASSDSAQGSDVSLTA. A disordered region spans residues 335 to 362; that stretch reads KSSGGKGGSYSQAASSDSAQGSDVSLTA. Over residues 343–362 the composition is skewed to low complexity; the sequence is SYSQAASSDSAQGSDVSLTA.

The protein belongs to the MHC class I family. As to quaternary structure, heterodimer of an alpha chain and a beta chain (beta-2-microglobulin).

Its subcellular location is the membrane. In terms of biological role, involved in the presentation of foreign antigens to the immune system. The sequence is that of Class I histocompatibility antigen, Gogo-B*0102 alpha chain from Gorilla gorilla gorilla (Western lowland gorilla).